The sequence spans 705 residues: Probable cyclic nucleotide-gated ion channel 16 (705 aa).

Topologically, residues Met1–His57 are cytoplasmic. The chain crosses the membrane as a helical span at residues Ile58 to Ile78. Residues Val79 to Arg91 are Extracellular-facing. Residues Phe92–Leu112 traverse the membrane as a helical segment. Over Leu113–Glu147 the chain is Cytoplasmic. A helical transmembrane segment spans residues Phe148–Pro168. Residues Asn169 to Asn180 lie on the Extracellular side of the membrane. The helical transmembrane segment at His181–Leu201 threads the bilayer. Over Asn202 to Tyr222 the chain is Cytoplasmic. The chain crosses the membrane as a helical span at residues Asn223–Ile243. Over Gln244–Thr353 the chain is Extracellular. The chain crosses the membrane as a helical span at residues Ile354–Val374. Residues Gln375–Phe705 are Cytoplasmic-facing. A nucleoside 3',5'-cyclic phosphate contacts are provided by residues Phe457–Lys580 and Glu528. The segment at Phe573–Tyr588 is calmodulin-binding. Positions Arg593 to Glu622 constitute an IQ domain. Disordered regions lie at residues Glu636 to Gln655 and Arg672 to Phe705. A compositionally biased stretch (low complexity) spans Ser642 to Gln655.

Belongs to the cyclic nucleotide-gated cation channel (TC 1.A.1.5) family. Homotetramer or heterotetramer.

It localises to the cell membrane. In terms of biological role, putative cyclic nucleotide-gated ion channel. The chain is Probable cyclic nucleotide-gated ion channel 16 (CNGC16) from Arabidopsis thaliana (Mouse-ear cress).